Reading from the N-terminus, the 194-residue chain is Peptidyl-tRNA hydrolase (194 aa).

Tyr-17 lines the tRNA pocket. The active-site Proton acceptor is His-22. Residues Tyr-68, Asn-70, and Asn-116 each coordinate tRNA.

This sequence belongs to the PTH family. Monomer.

It is found in the cytoplasm. The enzyme catalyses an N-acyl-L-alpha-aminoacyl-tRNA + H2O = an N-acyl-L-amino acid + a tRNA + H(+). Hydrolyzes ribosome-free peptidyl-tRNAs (with 1 or more amino acids incorporated), which drop off the ribosome during protein synthesis, or as a result of ribosome stalling. Its function is as follows. Catalyzes the release of premature peptidyl moieties from peptidyl-tRNA molecules trapped in stalled 50S ribosomal subunits, and thus maintains levels of free tRNAs and 50S ribosomes. This Pseudomonas syringae pv. syringae (strain B728a) protein is Peptidyl-tRNA hydrolase.